The following is a 195-amino-acid chain: Protein LIGHT-DEPENDENT SHORT HYPOCOTYLS 7 (195 aa).

Disordered stretches follow at residues 1–41 (MASH…LSRY) and 154–195 (SQAK…NLAS). The segment covering 21–36 (QPQPQPHQPQSPPNPP) has biased composition (pro residues). The ALOG domain occupies 40–167 (RYESQKRRDW…ARGVPYKKRK (128 aa)). Positions 162-175 (PYKKRKKRKKRNPM) are enriched in basic residues. The Nuclear localization signal signature appears at 165 to 169 (KRKKR). Over residues 184-195 (TTGTSSSSNLAS) the composition is skewed to low complexity.

This sequence belongs to the plant homeotic and developmental regulators ALOG protein family.

The protein resides in the nucleus. Functionally, probable transcription regulator that acts as a developmental regulator by promoting cell growth in response to light. This Arabidopsis thaliana (Mouse-ear cress) protein is Protein LIGHT-DEPENDENT SHORT HYPOCOTYLS 7 (LSH7).